A 336-amino-acid polypeptide reads, in one-letter code: Holliday junction branch migration complex subunit RuvB (336 aa).

The interval 4-184 (SDRLISSQSI…FGIVQRLEYY (181 aa)) is large ATPase domain (RuvB-L). Residues isoleucine 23, arginine 24, glycine 65, lysine 68, threonine 69, threonine 70, 131 to 133 (EDY), arginine 174, tyrosine 184, and arginine 221 contribute to the ATP site. Threonine 69 provides a ligand contact to Mg(2+). A small ATPAse domain (RuvB-S) region spans residues 185–255 (SVDSLTQIVA…MAQQALEMLE (71 aa)). The interval 258–336 (QHGFDLMDRK…HFGFSAIEQE (79 aa)) is head domain (RuvB-H). DNA contacts are provided by arginine 313 and arginine 318.

It belongs to the RuvB family. As to quaternary structure, homohexamer. Forms an RuvA(8)-RuvB(12)-Holliday junction (HJ) complex. HJ DNA is sandwiched between 2 RuvA tetramers; dsDNA enters through RuvA and exits via RuvB. An RuvB hexamer assembles on each DNA strand where it exits the tetramer. Each RuvB hexamer is contacted by two RuvA subunits (via domain III) on 2 adjacent RuvB subunits; this complex drives branch migration. In the full resolvosome a probable DNA-RuvA(4)-RuvB(12)-RuvC(2) complex forms which resolves the HJ.

It localises to the cytoplasm. The enzyme catalyses ATP + H2O = ADP + phosphate + H(+). Functionally, the RuvA-RuvB-RuvC complex processes Holliday junction (HJ) DNA during genetic recombination and DNA repair, while the RuvA-RuvB complex plays an important role in the rescue of blocked DNA replication forks via replication fork reversal (RFR). RuvA specifically binds to HJ cruciform DNA, conferring on it an open structure. The RuvB hexamer acts as an ATP-dependent pump, pulling dsDNA into and through the RuvAB complex. RuvB forms 2 homohexamers on either side of HJ DNA bound by 1 or 2 RuvA tetramers; 4 subunits per hexamer contact DNA at a time. Coordinated motions by a converter formed by DNA-disengaged RuvB subunits stimulates ATP hydrolysis and nucleotide exchange. Immobilization of the converter enables RuvB to convert the ATP-contained energy into a lever motion, pulling 2 nucleotides of DNA out of the RuvA tetramer per ATP hydrolyzed, thus driving DNA branch migration. The RuvB motors rotate together with the DNA substrate, which together with the progressing nucleotide cycle form the mechanistic basis for DNA recombination by continuous HJ branch migration. Branch migration allows RuvC to scan DNA until it finds its consensus sequence, where it cleaves and resolves cruciform DNA. This chain is Holliday junction branch migration complex subunit RuvB, found in Legionella pneumophila (strain Lens).